We begin with the raw amino-acid sequence, 193 residues long: Ribosomal RNA small subunit methyltransferase G (193 aa).

Residues Gly61, Leu66, 112-113 (IE), and Arg126 each bind S-adenosyl-L-methionine.

This sequence belongs to the methyltransferase superfamily. RNA methyltransferase RsmG family.

It localises to the cytoplasm. The catalysed reaction is guanosine(527) in 16S rRNA + S-adenosyl-L-methionine = N(7)-methylguanosine(527) in 16S rRNA + S-adenosyl-L-homocysteine. Its function is as follows. Specifically methylates the N7 position of guanine in position 527 of 16S rRNA. This chain is Ribosomal RNA small subunit methyltransferase G, found in Paracoccus denitrificans (strain Pd 1222).